A 555-amino-acid chain; its full sequence is Urocanate hydratase (555 aa).

NAD(+) contacts are provided by residues 52–53, Q130, 176–178, E196, R201, 242–243, 263–267, 273–274, and Y322; these read GG, GMG, NA, QTSAH, and YL. C410 is a catalytic residue. Residue G492 coordinates NAD(+).

This sequence belongs to the urocanase family. Requires NAD(+) as cofactor.

The protein localises to the cytoplasm. The enzyme catalyses 4-imidazolone-5-propanoate = trans-urocanate + H2O. It functions in the pathway amino-acid degradation; L-histidine degradation into L-glutamate; N-formimidoyl-L-glutamate from L-histidine: step 2/3. Its function is as follows. Catalyzes the conversion of urocanate to 4-imidazolone-5-propionate. The sequence is that of Urocanate hydratase from Shewanella sp. (strain W3-18-1).